The chain runs to 370 residues: Homospermidine synthase 2 (370 aa).

Belongs to the deoxyhypusine synthase family. Homotetramer. NAD(+) serves as cofactor. In terms of processing, the N-terminus is blocked. As to expression, expressed in roots.

The catalysed reaction is putrescine + spermidine = sym-homospermidine + propane-1,3-diamine. Its pathway is alkaloid biosynthesis; pyrrolizidine alkaloid biosynthesis. In terms of biological role, catalyzes the transfer of an aminobutyl unit from spermidine onto putrescine. The resulting polyamine homospermidine is a precursor in the biosynthesis of pyrrolizidine alkaloids. The polypeptide is Homospermidine synthase 2 (Senecio vernalis (Spring groundsel)).